The chain runs to 488 residues: Cobyric acid synthase (488 aa).

Positions 248–435 (VLKVVVPVLP…LHGLFESPAA (188 aa)) constitute a GATase cobBQ-type domain. Cysteine 329 functions as the Nucleophile in the catalytic mechanism. Residue histidine 427 is part of the active site.

Belongs to the CobB/CobQ family. CobQ subfamily.

It participates in cofactor biosynthesis; adenosylcobalamin biosynthesis. Catalyzes amidations at positions B, D, E, and G on adenosylcobyrinic A,C-diamide. NH(2) groups are provided by glutamine, and one molecule of ATP is hydrogenolyzed for each amidation. The sequence is that of Cobyric acid synthase from Pseudomonas fluorescens (strain Pf0-1).